We begin with the raw amino-acid sequence, 367 residues long: Eukaryotic translation initiation factor 3 subunit H (367 aa).

The region spanning 14–166 (VQVEALVVMK…LRAFRLSPTF (153 aa)) is the MPN domain.

The protein belongs to the eIF-3 subunit H family. As to quaternary structure, component of the eukaryotic translation initiation factor 3 (eIF-3) complex.

The protein resides in the cytoplasm. Component of the eukaryotic translation initiation factor 3 (eIF-3) complex, which is involved in protein synthesis of a specialized repertoire of mRNAs and, together with other initiation factors, stimulates binding of mRNA and methionyl-tRNAi to the 40S ribosome. The eIF-3 complex specifically targets and initiates translation of a subset of mRNAs involved in cell proliferation. This chain is Eukaryotic translation initiation factor 3 subunit H, found in Botryotinia fuckeliana (strain B05.10) (Noble rot fungus).